A 1393-amino-acid polypeptide reads, in one-letter code: Polarized growth protein RAX2 (1393 aa).

An N-terminal signal peptide occupies residues 1-21 (MLVQFQQLLLLLISIIKLCQA). Topologically, residues 22-1329 (DDNDNSFFQP…TNKNLSRGKV (1308 aa)) are extracellular. N-linked (GlcNAc...) asparagine glycosylation is found at N62, N85, N105, N125, N133, N139, N164, N186, N195, N212, N256, N260, N266, N269, N362, N398, N405, N479, N536, N542, N565, N599, N646, N649, N653, N674, N689, N696, N702, N714, N747, N764, N768, N792, N829, N863, N899, N935, N946, N958, N985, N1020, N1030, N1041, N1213, N1232, N1262, and N1323. Residues 1330 to 1350 (VGISLACALGSTTLLGLLYII) traverse the membrane as a helical segment. Residues 1351 to 1393 (PYFALFKNRKDGYFQPERIHEDEMMDAVNPEDLLHEIDLQREK) are Cytoplasmic-facing.

It belongs to the RAX2 family.

It is found in the cell membrane. The protein localises to the cell tip. In terms of biological role, required for establishing sites of emergence of yeast and hyphal daughters and for maintaining the linearity of hyphal growth, but not involved in responses that require a reorientation of the direction of already established hyphal growth (tropisms). Does not play a role in penetration or injury of human epithelial cells. This Candida albicans (strain SC5314 / ATCC MYA-2876) (Yeast) protein is Polarized growth protein RAX2.